Here is a 380-residue protein sequence, read N- to C-terminus: RNA-binding motif protein, Y chromosome (380 aa).

Positions 8-86 constitute an RRM domain; sequence GKIFIGGLNI…KRIKVKQARR (79 aa). Disordered regions lie at residues 82–226 and 279–358; these read KQAR…STSR and HEAP…YSAS. Positions 166–178 are enriched in polar residues; it reads RSATSAQTRSNTG. 2 stretches are compositionally biased toward basic and acidic residues: residues 180-190 and 333-351; these read RGREPHRREIS and IDREYFDREGRQERGHSPK.

In terms of assembly, interacts with SRSF3/SRP20, SRSF9/SRP30, SRSF5/SRP40, and SRSF6/SRP55; this interaction inhibits SRSF family member pre-mRNA splicing. Interacts with splicing factor proteins and KHDRBS3. Testis-specific.

It is found in the nucleus. In terms of biological role, RNA-binding protein involved in pre-mRNA splicing. Required for sperm development. Acts additively with TRA2B to promote exon 7 inclusion of the survival motor neuron SMN. Binds non-specifically to mRNAs. The chain is RNA-binding motif protein, Y chromosome from Mus musculus (Mouse).